The sequence spans 132 residues: Small ribosomal subunit protein uS8 (132 aa).

It belongs to the universal ribosomal protein uS8 family. Part of the 30S ribosomal subunit. Contacts proteins S5 and S12.

One of the primary rRNA binding proteins, it binds directly to 16S rRNA central domain where it helps coordinate assembly of the platform of the 30S subunit. The protein is Small ribosomal subunit protein uS8 of Rhodopseudomonas palustris (strain BisB18).